The primary structure comprises 232 residues: Glutathione S-transferase E14 (232 aa).

Residues 4–85 enclose the GST N-terminal domain; that stretch reads PKPILYYDER…HLAEKFDEGG (82 aa). Residues 91-218 form the GST C-terminal domain; the sequence is EHAERMKVLN…RQTMESVGSF (128 aa).

This sequence belongs to the GST superfamily. Epsilon family. In terms of tissue distribution, expressed in the adult ovary (at protein level).

The enzyme catalyses RX + glutathione = an S-substituted glutathione + a halide anion + H(+). Its function is as follows. Conjugation of reduced glutathione to a wide number of exogenous and endogenous hydrophobic electrophiles. Essential for ecdysteroid biosynthesis. May be involved in detoxification. In Drosophila melanogaster (Fruit fly), this protein is Glutathione S-transferase E14.